We begin with the raw amino-acid sequence, 78 residues long: TP53-regulated inhibitor of apoptosis 1-A (78 aa).

A coiled-coil region spans residues 1–52 (MNSVGEECTDMKRDYDQCFNRWFAEKFLKGAGSGDPCTELFRRYRECVQKAI). One can recognise a CHCH domain in the interval 5–55 (GEECTDMKRDYDQCFNRWFAEKFLKGAGSGDPCTELFRRYRECVQKAIKDK). 2 short sequence motifs (cx9C motif) span residues 8-18 (CTDMKRDYDQC) and 37-47 (CTELFRRYREC). Cystine bridges form between Cys-8–Cys-47 and Cys-18–Cys-37.

The protein belongs to the TRIAP1/MDM35 family. In terms of assembly, monomer. Forms a complex with prelid1 in the mitochondrion intermembrane space. Interacts with prelid3a.

It localises to the mitochondrion. The protein resides in the mitochondrion intermembrane space. The catalysed reaction is a 1,2-diacyl-sn-glycero-3-phosphate(in) = a 1,2-diacyl-sn-glycero-3-phosphate(out). Functionally, involved in the modulation of the mitochondrial apoptotic pathway by ensuring the accumulation of cardiolipin (CL) in mitochondrial membranes. The triap1:prelid1 complex probably functions as a phosphatidic acid (PA) transporter across the mitochondrion intermembrane space to provide PA for cardiolipin CL synthesis in the inner membrane. Likewise, the triap1:prelid3a complex mediates the transfer of phosphatidic acid (PA) between liposomes (in vitro) and probably functions as a PA transporter across the mitochondrion intermembrane space (in vivo). Mediates cell survival by inhibiting activation of caspase-9 which prevents induction of apoptosis. Required for pronephros development; probably involved at an early stage in the formation of pronephric components derived from the somatic layer. This is TP53-regulated inhibitor of apoptosis 1-A (triap1-a) from Xenopus laevis (African clawed frog).